A 429-amino-acid polypeptide reads, in one-letter code: Ribosomal RNA small subunit methyltransferase B (429 aa).

Residues 254-260 (CAAPGGK), Asp-277, Asp-303, and Asp-322 contribute to the S-adenosyl-L-methionine site. The Nucleophile role is filled by Cys-375.

The protein belongs to the class I-like SAM-binding methyltransferase superfamily. RsmB/NOP family.

It is found in the cytoplasm. The enzyme catalyses cytidine(967) in 16S rRNA + S-adenosyl-L-methionine = 5-methylcytidine(967) in 16S rRNA + S-adenosyl-L-homocysteine + H(+). Functionally, specifically methylates the cytosine at position 967 (m5C967) of 16S rRNA. This chain is Ribosomal RNA small subunit methyltransferase B, found in Shigella sonnei (strain Ss046).